Consider the following 257-residue polypeptide: Thiazole synthase (257 aa).

K96 (schiff-base intermediate with DXP) is an active-site residue. 1-deoxy-D-xylulose 5-phosphate-binding positions include G157, 184-185 (AG), and 206-207 (NT).

Belongs to the ThiG family. As to quaternary structure, homotetramer. Forms heterodimers with either ThiH or ThiS.

It localises to the cytoplasm. It carries out the reaction [ThiS sulfur-carrier protein]-C-terminal-Gly-aminoethanethioate + 2-iminoacetate + 1-deoxy-D-xylulose 5-phosphate = [ThiS sulfur-carrier protein]-C-terminal Gly-Gly + 2-[(2R,5Z)-2-carboxy-4-methylthiazol-5(2H)-ylidene]ethyl phosphate + 2 H2O + H(+). The protein operates within cofactor biosynthesis; thiamine diphosphate biosynthesis. Catalyzes the rearrangement of 1-deoxy-D-xylulose 5-phosphate (DXP) to produce the thiazole phosphate moiety of thiamine. Sulfur is provided by the thiocarboxylate moiety of the carrier protein ThiS. In vitro, sulfur can be provided by H(2)S. This chain is Thiazole synthase, found in Bartonella henselae (strain ATCC 49882 / DSM 28221 / CCUG 30454 / Houston 1) (Rochalimaea henselae).